Consider the following 150-residue polypeptide: Large ribosomal subunit protein bL9 (150 aa).

This sequence belongs to the bacterial ribosomal protein bL9 family.

Binds to the 23S rRNA. In Methylibium petroleiphilum (strain ATCC BAA-1232 / LMG 22953 / PM1), this protein is Large ribosomal subunit protein bL9.